We begin with the raw amino-acid sequence, 953 residues long: Coatomer subunit beta (953 aa).

The residue at position 2 (threonine 2) is an N-acetylthreonine. HEAT repeat units follow at residues 96-131, 132-168, 240-276, 277-314, 316-353, and 396-433; these read HEMILVCDAYRKDLQHPNEFIRGSTLRFLCKLKEAE, LLEPLMPAIRACLEHRHSYVRRNAVLAIYTIYRNFEH, SERARFIRCIYNLLQSSSPAVKYEAAGTLVTLSSAPT, AIKAAAQCYIDLIIKESDNNVKLIVLDRLIELKEHPAH, RVLQDLVMDILRVLSTPDLEVRKKTLQLALDLVSSRNV, and DMAANVIPVLMEFLSDSNEAAAADVLEFVREAIQRFDN. The residue at position 494 (lysine 494) is an N6-acetyllysine.

In terms of assembly, oligomeric complex that consists of at least the alpha, beta, beta', gamma, delta, epsilon and zeta subunits. Interacts with CAPN8 and PRKCE. Interacts with SCYL1. Interacts with COPG1. Interacts with ARF1 (myristoylated); this interaction is required for binding of COPB1 to Golgi membranes. Interacts (via trunk domain) with ARF1 (via switch I region); the interaction is direct. Interacts with KCNK2 (via N-terminus); this interaction increases the channel-mediated whole cell currents and promotes plasma membrane expression of KCNK2. Interacts with STX17. Interacts with TMEM115. Interacts with TMEM41B. High expression in the lung, kidney, skeletal muscle and small intestine, and lower level of expression in heart, liver, spleen, stomach and fat.

The protein localises to the cytoplasm. Its subcellular location is the golgi apparatus membrane. It is found in the cytoplasmic vesicle. It localises to the COPI-coated vesicle membrane. The protein resides in the cell membrane. The protein localises to the endoplasmic reticulum-Golgi intermediate compartment. The coatomer is a cytosolic protein complex that binds to dilysine motifs and reversibly associates with Golgi non-clathrin-coated vesicles, which further mediate biosynthetic protein transport from the ER, via the Golgi up to the trans Golgi network. Coatomer complex is required for budding from Golgi membranes, and is essential for the retrograde Golgi-to-ER transport of dilysine-tagged proteins. In mammals, the coatomer can only be recruited by membranes associated to ADP-ribosylation factors (ARFs), which are small GTP-binding proteins; the complex also influences the Golgi structural integrity, as well as the processing, activity, and endocytic recycling of LDL receptors. Plays a functional role in facilitating the transport of kappa-type opioid receptor mRNAs into axons and enhances translation of these proteins. Required for limiting lipid storage in lipid droplets. Involved in lipid homeostasis by regulating the presence of perilipin family members PLIN2 and PLIN3 at the lipid droplet surface and promoting the association of adipocyte surface triglyceride lipase (PNPLA2) with the lipid droplet to mediate lipolysis. Involved in the Golgi disassembly and reassembly processes during cell cycle. Involved in autophagy by playing a role in early endosome function. Plays a role in organellar compartmentalization of secretory compartments including endoplasmic reticulum (ER)-Golgi intermediate compartment (ERGIC), Golgi, trans-Golgi network (TGN) and recycling endosomes, and in biosynthetic transport of CAV1. In Sus scrofa (Pig), this protein is Coatomer subunit beta.